An 86-amino-acid chain; its full sequence is Exodeoxyribonuclease 7 small subunit (86 aa).

The segment at 1–27 is disordered; that stretch reads MQDELFETEKIPPKNTKNAKNAPKKSF.

Belongs to the XseB family. As to quaternary structure, heterooligomer composed of large and small subunits.

The protein resides in the cytoplasm. It catalyses the reaction Exonucleolytic cleavage in either 5'- to 3'- or 3'- to 5'-direction to yield nucleoside 5'-phosphates.. Functionally, bidirectionally degrades single-stranded DNA into large acid-insoluble oligonucleotides, which are then degraded further into small acid-soluble oligonucleotides. The polypeptide is Exodeoxyribonuclease 7 small subunit (Helicobacter pylori (strain G27)).